The following is a 280-amino-acid chain: Phosphatidylglycerol--prolipoprotein diacylglyceryl transferase (280 aa).

A run of 4 helical transmembrane segments spans residues 30–50, 71–91, 106–126, and 132–152; these read WYGL…RRIV, FLLW…ILFY, IWNG…AMII, and AIPI…GLFF. A 1,2-diacyl-sn-glycero-3-phospho-(1'-sn-glycerol) is bound at residue arginine 154. 3 consecutive transmembrane segments (helical) span residues 188–208, 217–237, and 251–271; these read QLYE…WFVY, GLVT…VEFF, and WLTM…WAIA.

It belongs to the Lgt family.

It is found in the cell inner membrane. The enzyme catalyses L-cysteinyl-[prolipoprotein] + a 1,2-diacyl-sn-glycero-3-phospho-(1'-sn-glycerol) = an S-1,2-diacyl-sn-glyceryl-L-cysteinyl-[prolipoprotein] + sn-glycerol 1-phosphate + H(+). It participates in protein modification; lipoprotein biosynthesis (diacylglyceryl transfer). Functionally, catalyzes the transfer of the diacylglyceryl group from phosphatidylglycerol to the sulfhydryl group of the N-terminal cysteine of a prolipoprotein, the first step in the formation of mature lipoproteins. This Sinorhizobium medicae (strain WSM419) (Ensifer medicae) protein is Phosphatidylglycerol--prolipoprotein diacylglyceryl transferase.